A 354-amino-acid polypeptide reads, in one-letter code: Guanine nucleotide-binding protein G(o) subunit alpha (354 aa).

Gly2 is lipidated: N-myristoyl glycine. Cys3 carries S-palmitoyl cysteine lipidation. A G-alpha domain is found at 32–354; sequence KDVKLLLLGA…ANNLRGCGLY (323 aa). Residues 35–48 form a G1 motif region; that stretch reads KLLLLGAGESGKST. GTP contacts are provided by Glu43, Lys46, Ser47, Thr48, Ser152, Leu176, Arg177, Thr178, and Arg179. Residue Ser47 coordinates Mg(2+). The tract at residues 174–182 is G2 motif; it reads DILRTRVKT. Residue Thr182 coordinates Mg(2+). The tract at residues 197–206 is G3 motif; the sequence is FRLFDVGGQR. Position 205 is a 5-glutamyl histamine (Gln205). The interval 266–273 is G4 motif; the sequence is ILFLNKKD. GTP-binding residues include Asn270, Asp273, and Cys325. The interval 324 to 329 is G5 motif; that stretch reads TCATDT. Cys351 carries the S-palmitoyl cysteine lipid modification.

This sequence belongs to the G-alpha family. G(i/o/t/z) subfamily. As to quaternary structure, g proteins are composed of 3 units; alpha, beta and gamma. The alpha chain contains the guanine nucleotide binding site. Forms a complex with GNB1 and GNG3. Interacts with RGS14. Interacts with RGS16. Interacts with RGS19. Interacts (when palmitoylated) with ADGRG3. Histaminylated at Gln-205 residues by TGM2.

It localises to the cell membrane. It is found in the membrane. The catalysed reaction is GTP + H2O = GDP + phosphate + H(+). The GTPase activity is promoted by GTPAse activators, such as RGS14, RGS16 and RGS19. In terms of biological role, guanine nucleotide-binding proteins (G proteins) function as transducers downstream of G protein-coupled receptors (GPCRs) in numerous signaling cascades. The alpha chain contains the guanine nucleotide binding site and alternates between an active, GTP-bound state and an inactive, GDP-bound state. Signaling by an activated GPCR promotes GDP release and GTP binding. The alpha subunit has a low GTPase activity that converts bound GTP to GDP, thereby terminating the signal. Both GDP release and GTP hydrolysis are modulated by numerous regulatory proteins. Signaling is mediated via effector proteins, such as adenylate cyclase. Inhibits adenylate cyclase activity, leading to decreased intracellular cAMP levels. This is Guanine nucleotide-binding protein G(o) subunit alpha (Gnao1) from Mus musculus (Mouse).